The sequence spans 557 residues: Kelch repeat and BTB domain-containing protein 2 (557 aa).

A BTB domain is found at 26–95; sequence CDVIITIGDG…LYNRHISSMN (70 aa). The region spanning 133–223 is the BACK domain; the sequence is HKLYEMVHIP…CIDIQNLDKK (91 aa). Kelch repeat units follow at residues 305 to 352, 353 to 399, and 401 to 464; these read EIII…VIDD, TIYA…VLDQ, and IYII…SHKD.

Interacts (via BTB domain) with host CUL3.

The protein localises to the host cytoplasm. Its function is as follows. Probable substrate-specific adapter of CUL3-containing E3 ubiquitin-protein ligases which mediate the ubiquitination and subsequent proteasomal degradation of host target proteins. This is Kelch repeat and BTB domain-containing protein 2 (KBTB2) from Bos taurus (Bovine).